The following is a 386-amino-acid chain: MFPEPPTLGSPAPKTPPDSSRIRQGAVPAWVLATIVLGSGLLVFSSCFCLYRKRCRRRMGKKSQAQAQVHLQEVKELGRSYIDKVQPEIEELDRSPSMPGQQVSDKHQLGRLQYSLDYDFQTGQLLVGILQAQGLAALDLGGSSDPYVSVYLLPDKRRRHETKVHRQTLNPHFGETFAFKVPYVELGGRVLVMAVYDFDRFSRNDAIGEVRVPMSSVNLGRPVQAWRELQVAPKEEQEKLGDICFSLRYVPTAGKLTVIVLEAKNLKKMDVGGLSDPYVKVHLLQGGKKVRKKKTTIKKNTLNPYYNEAFSFEVPCDQVQKVQVELTVLDYDKLGKNEAIGRVAVGAAVGGAGLRHWADMLANPRRPIAQWHSLRPPDRARPIPAP.

Over residues 1–16 (MFPEPPTLGSPAPKTP) the composition is skewed to pro residues. Residues 1 to 21 (MFPEPPTLGSPAPKTPPDSSR) form a disordered region. The Vesicular portion of the chain corresponds to 1–24 (MFPEPPTLGSPAPKTPPDSSRIRQ). Residues 25-45 (GAVPAWVLATIVLGSGLLVFS) form a helical membrane-spanning segment. Residues 46–386 (SCFCLYRKRC…PDRARPIPAP (341 aa)) lie on the Cytoplasmic side of the membrane. C2 domains follow at residues 108–227 (QLGR…QAWR) and 239–372 (KLGD…AQWH). Ca(2+) contacts are provided by L138, D139, D145, D197, F198, D199, S202, D205, D270, D276, D330, and D332.

The protein belongs to the synaptotagmin family. In terms of assembly, homodimer. Interacts with both alpha- and beta-tubulin. Ca(2+) serves as cofactor.

The protein resides in the cytoplasmic vesicle. The protein localises to the secretory vesicle. Its subcellular location is the synaptic vesicle membrane. It localises to the recycling endosome membrane. Its function is as follows. May be involved in Ca(2+)-dependent exocytosis of secretory vesicles through Ca(2+) and phospholipid binding to the C2 domain or may serve as Ca(2+) sensors in the process of vesicular trafficking and exocytosis. Regulates the Ca(2+)-dependent secretion of norepinephrine in PC12 cells. Required for export from the endocytic recycling compartment to the cell surface. The sequence is that of Synaptotagmin-5 (Syt5) from Mus musculus (Mouse).